The chain runs to 586 residues: Assimilatory ferredoxin-dependent nitrite reductase (586 aa).

Residues cysteine 411, cysteine 417, cysteine 455, and cysteine 459 each contribute to the [4Fe-4S] cluster site. Cysteine 459 is a siroheme binding site. Positions serine 566–aspartate 586 are disordered.

The protein belongs to the nitrite and sulfite reductase 4Fe-4S domain family. As to quaternary structure, monomer. The cofactor is siroheme. [4Fe-4S] cluster is required as a cofactor.

The enzyme catalyses 6 oxidized [2Fe-2S]-[ferredoxin] + NH4(+) + 2 H2O = nitrite + 6 reduced [2Fe-2S]-[ferredoxin] + 8 H(+). It participates in nitrogen metabolism; nitrate reduction (assimilation). Its activity is regulated as follows. Inhibited by cyanide and azide. Catalyzes the reduction of nitrite to ammonium in the nitrate assimilation pathway, using ferredoxin as the electron donor. Can use reduced methyl viologen but neither NADPH nor NADH as electron donors. This Haloferax mediterranei (strain ATCC 33500 / DSM 1411 / JCM 8866 / NBRC 14739 / NCIMB 2177 / R-4) (Halobacterium mediterranei) protein is Assimilatory ferredoxin-dependent nitrite reductase.